We begin with the raw amino-acid sequence, 586 residues long: Asparagine synthetase [glutamine-hydrolyzing] (586 aa).

C2 (for GATase activity) is an active-site residue. In terms of domain architecture, Glutamine amidotransferase type-2 spans 2-185 (CGILAVLGVV…PGHLYSSKTG (184 aa)). L-glutamine-binding positions include 50 to 54 (RLAII), 75 to 77 (NGE), and D98. In terms of domain architecture, Asparagine synthetase spans 193 to 516 (PPWFSETVPS…PQDSARETVP (324 aa)). Residues L231, I267, and 341-342 (SG) each bind ATP.

The catalysed reaction is L-aspartate + L-glutamine + ATP + H2O = L-asparagine + L-glutamate + AMP + diphosphate + H(+). It functions in the pathway amino-acid biosynthesis; L-asparagine biosynthesis; L-asparagine from L-aspartate (L-Gln route): step 1/1. Essential for nitrogen assimilation, distribution and remobilization within the plant via the phloem. The chain is Asparagine synthetase [glutamine-hydrolyzing] (ASN1) from Zea mays (Maize).